A 136-amino-acid polypeptide reads, in one-letter code: Gilles de la Tourette syndrome chromosomal region candidate gene 1 protein (136 aa).

Residues 73–93 (AICMEVFLFLWFIAPIYACVC) traverse the membrane as a helical segment.

Its subcellular location is the membrane. In Homo sapiens (Human), this protein is Gilles de la Tourette syndrome chromosomal region candidate gene 1 protein (GTSCR1).